We begin with the raw amino-acid sequence, 390 residues long: Chorismate synthase (390 aa).

Residues arginine 39 and arginine 45 each coordinate NADP(+). FMN-binding positions include 132–134 (RSS), 253–254 (NA), glycine 298, 313–317 (KPIPT), and arginine 339.

This sequence belongs to the chorismate synthase family. As to quaternary structure, homotetramer. The cofactor is FMNH2.

The catalysed reaction is 5-O-(1-carboxyvinyl)-3-phosphoshikimate = chorismate + phosphate. Its pathway is metabolic intermediate biosynthesis; chorismate biosynthesis; chorismate from D-erythrose 4-phosphate and phosphoenolpyruvate: step 7/7. In terms of biological role, catalyzes the anti-1,4-elimination of the C-3 phosphate and the C-6 proR hydrogen from 5-enolpyruvylshikimate-3-phosphate (EPSP) to yield chorismate, which is the branch point compound that serves as the starting substrate for the three terminal pathways of aromatic amino acid biosynthesis. This reaction introduces a second double bond into the aromatic ring system. The chain is Chorismate synthase from Bacillus velezensis (strain DSM 23117 / BGSC 10A6 / LMG 26770 / FZB42) (Bacillus amyloliquefaciens subsp. plantarum).